Consider the following 339-residue polypeptide: Leucine-rich repeat-containing protein 59 (339 aa).

Residues 1 to 282 are Cytoplasmic-facing; sequence MARGGGKSGS…KHSWSRSVLR (282 aa). LRR repeat units lie at residues 10–31, 40–61, 63–84, and 86–107; these read SLKD…SEVP, KATV…FCSL, HLVK…FGRL, and SLQH…FAQL. Residues 181-254 adopt a coiled-coil conformation; it reads MKVIQSEQDR…EMEKKTKKET (74 aa). The interval 186–275 is disordered; it reads SEQDRERQRK…PPQPARHKHS (90 aa). Basic and acidic residues predominate over residues 187–256; it reads EQDRERQRKL…EKKTKKETVQ (70 aa). Residues 283–300 traverse the membrane as a helical segment; it reads ALLLVLLCILCTLAVCKL. Over 301-339 the chain is Lumenal; sequence TELQHQPLCVSVNTLYEDVVAAVQNHKTLQNMLQQNSQQ.

In terms of assembly, interacts with SGO1.

Its subcellular location is the microsome membrane. It is found in the endoplasmic reticulum membrane. It localises to the nucleus envelope. Functionally, required for nuclear import of FGF1. The polypeptide is Leucine-rich repeat-containing protein 59 (LRRC59) (Gallus gallus (Chicken)).